The chain runs to 475 residues: Ribulose bisphosphate carboxylase large chain (475 aa).

The propeptide occupies 1 to 2; the sequence is MS. An N-acetylproline modification is found at Pro-3. Position 14 is an N6,N6,N6-trimethyllysine (Lys-14). Residues Asn-123 and Thr-173 each coordinate substrate. Lys-175 functions as the Proton acceptor in the catalytic mechanism. Lys-177 provides a ligand contact to substrate. Positions 201, 203, and 204 each coordinate Mg(2+). Residue Lys-201 is modified to N6-carboxylysine. The active-site Proton acceptor is His-294. Residues Arg-295, His-327, and Ser-379 each coordinate substrate.

The protein belongs to the RuBisCO large chain family. Type I subfamily. Heterohexadecamer of 8 large chains and 8 small chains; disulfide-linked. The disulfide link is formed within the large subunit homodimers. Mg(2+) serves as cofactor. In terms of processing, the disulfide bond which can form in the large chain dimeric partners within the hexadecamer appears to be associated with oxidative stress and protein turnover.

It is found in the plastid. The protein localises to the chloroplast. It carries out the reaction 2 (2R)-3-phosphoglycerate + 2 H(+) = D-ribulose 1,5-bisphosphate + CO2 + H2O. It catalyses the reaction D-ribulose 1,5-bisphosphate + O2 = 2-phosphoglycolate + (2R)-3-phosphoglycerate + 2 H(+). In terms of biological role, ruBisCO catalyzes two reactions: the carboxylation of D-ribulose 1,5-bisphosphate, the primary event in carbon dioxide fixation, as well as the oxidative fragmentation of the pentose substrate in the photorespiration process. Both reactions occur simultaneously and in competition at the same active site. The protein is Ribulose bisphosphate carboxylase large chain of Angiopteris evecta (Mule's foot fern).